A 459-amino-acid chain; its full sequence is Ribulose bisphosphate carboxylase large chain (459 aa).

Lys-4 bears the N6,N6,N6-trimethyllysine mark. The substrate site is built by Asn-113 and Thr-163. Catalysis depends on Lys-165, which acts as the Proton acceptor. Lys-167 lines the substrate pocket. Lys-191, Asp-193, and Glu-194 together coordinate Mg(2+). Lys-191 carries the post-translational modification N6-carboxylysine. Residue His-284 is the Proton acceptor of the active site. The substrate site is built by Arg-285, His-317, and Ser-369.

This sequence belongs to the RuBisCO large chain family. Type I subfamily. Heterohexadecamer of 8 large chains and 8 small chains; disulfide-linked. The disulfide link is formed within the large subunit homodimers. Mg(2+) serves as cofactor. Post-translationally, the disulfide bond which can form in the large chain dimeric partners within the hexadecamer appears to be associated with oxidative stress and protein turnover.

The protein resides in the plastid. Its subcellular location is the chloroplast. It carries out the reaction 2 (2R)-3-phosphoglycerate + 2 H(+) = D-ribulose 1,5-bisphosphate + CO2 + H2O. The enzyme catalyses D-ribulose 1,5-bisphosphate + O2 = 2-phosphoglycolate + (2R)-3-phosphoglycerate + 2 H(+). Its function is as follows. RuBisCO catalyzes two reactions: the carboxylation of D-ribulose 1,5-bisphosphate, the primary event in carbon dioxide fixation, as well as the oxidative fragmentation of the pentose substrate in the photorespiration process. Both reactions occur simultaneously and in competition at the same active site. This Nyssa ogeche (Ogeechee tupelo) protein is Ribulose bisphosphate carboxylase large chain.